A 1131-amino-acid polypeptide reads, in one-letter code: Protein TOPLESS (1131 aa).

In terms of domain architecture, LisH spans 4–36; that stretch reads LSRELVFLILQFLDEEKFKETVHKLEQESGFFF. In terms of domain architecture, CTLH spans 34-92; it reads FFFNMKYFEDEVHNGNWDEVEKYLSGFTKVDDNRYSMKIFFEIRKQKYLEALDKHDRPK. S214 carries the post-translational modification Phosphoserine. The disordered stretch occupies residues 286–305; sequence TPPTNASLDYPSADSEHVSK. WD repeat units lie at residues 353–393, 415–454, 460–501, 504–545, 548–591, 595–634, 639–678, 710–756, 766–805, 833–871, 874–914, 917–956, 967–1005, 1010–1049, and 1060–1102; these read SQGS…RLVQ, EPVV…DMRQ, AHVG…KRHT, GHEA…SRVD, APGR…VKRT, FHKR…LLTA, GGLQ…RLLH, DRSA…EPSQ, LRVA…RNAT, NPEE…TMAT, PPPP…VKSK, GHSK…KQRS, NSAP…CMKQ, ESLA…LRCR, and LSNS…GKWG. The segment at 1100-1131 is disordered; the sequence is KWGVAPPAENGSASGAPTAPSVGASASDQPQR.

As to quaternary structure, tetramer. Homodimer. Interacts (via the LisH domain) with WUS (via the C-terminal domain). Interacts with NINJA/AFPH2. Interacts with IAA1; IAA2; IAA3; IAA4; IAA6; IAA8; IAA9; IAA11; IAA13; IAA14; IAA17; IAA18; IAA26; IAA27 and IAA28. Interacts (via the LisH domain) with IAA12/BDL (via domain I). Can form a complex with IAA12 and ARF5. Interacts with AP2 (via EAR motif) and HDA19. Interacts with TIFY5A/JAZ8 (via EAR motif). Interacts with SPEAR3/TIE1. Interacts with SPL (via EAR motif). Interacts with ZAT2 and ZAT3 (via the EAR motif). Interacts with JAZ13 (via EAR motif). Interacts with GIR1 and GIR2. Expressed in embryo and in extraembryonic tissues. Expressed in inflorescences, flowers, floral meristems, developing anthers and ovules. Detected in the vascular tissues, shoot apical meristem, cotyledons and young leaves. Expressed ubiquitously in the pistils, stamens and pollens.

The protein localises to the nucleus. Its function is as follows. Transcriptional corepressor. May repress the expression of root-promoting genes in the top half of the embryo to allow proper differentiation of the shoot pole during the transition stage of embryogenesis. Regulates the expression of PLT1 and PLT2. Negative regulator of jasmonate responses. Negative regulator of auxin responses. Negative regulator of multiple floral organ identity genes. Required for ovule development. In Arabidopsis thaliana (Mouse-ear cress), this protein is Protein TOPLESS (TPL).